The sequence spans 348 residues: Protein RecA (348 aa).

65–72 is an ATP binding site; that stretch reads GPESSGKT. Residues 326 to 348 form a disordered region; the sequence is QMGSESLSSSSDDDDIKEESGEE. Residues 336–348 are compositionally biased toward acidic residues; the sequence is SDDDDIKEESGEE.

This sequence belongs to the RecA family.

The protein resides in the cytoplasm. Its function is as follows. Can catalyze the hydrolysis of ATP in the presence of single-stranded DNA, the ATP-dependent uptake of single-stranded DNA by duplex DNA, and the ATP-dependent hybridization of homologous single-stranded DNAs. It interacts with LexA causing its activation and leading to its autocatalytic cleavage. The polypeptide is Protein RecA (Campylobacter hominis (strain ATCC BAA-381 / DSM 21671 / CCUG 45161 / LMG 19568 / NCTC 13146 / CH001A)).